An 83-amino-acid chain; its full sequence is Sec-independent protein translocase protein TatA (83 aa).

Residues 2 to 22 (GLGGISIWQLLIVLVIVLLLF) form a helical membrane-spanning segment. 2 stretches are compositionally biased toward basic and acidic residues: residues 50-65 (AAKQEAEEAEQKKVAA) and 74-83 (AEQKEKTEAK). Residues 50–83 (AAKQEAEEAEQKKVAAEEAAAAKTAEQKEKTEAK) are disordered.

The protein belongs to the TatA/E family. As to quaternary structure, the Tat system comprises two distinct complexes: a TatABC complex, containing multiple copies of TatA, TatB and TatC subunits, and a separate TatA complex, containing only TatA subunits. Substrates initially bind to the TatABC complex, which probably triggers association of the separate TatA complex to form the active translocon.

Its subcellular location is the cell inner membrane. In terms of biological role, part of the twin-arginine translocation (Tat) system that transports large folded proteins containing a characteristic twin-arginine motif in their signal peptide across membranes. TatA could form the protein-conducting channel of the Tat system. In Saccharophagus degradans (strain 2-40 / ATCC 43961 / DSM 17024), this protein is Sec-independent protein translocase protein TatA.